Consider the following 268-residue polypeptide: Undecaprenyl-diphosphatase (268 aa).

The next 7 membrane-spanning stretches (helical) occupy residues 41–61 (LAYS…LIYF), 81–101 (WLTY…PLYM), 106–126 (YLLL…AVIF), 146–166 (MTLG…LPGI), 191–211 (FVLV…SEGG), 213–233 (VATP…LVTI), and 245–265 (VTLV…TRIL).

This sequence belongs to the UppP family.

The protein resides in the cell membrane. It carries out the reaction di-trans,octa-cis-undecaprenyl diphosphate + H2O = di-trans,octa-cis-undecaprenyl phosphate + phosphate + H(+). Functionally, catalyzes the dephosphorylation of undecaprenyl diphosphate (UPP). This is Undecaprenyl-diphosphatase from Pyrobaculum islandicum (strain DSM 4184 / JCM 9189 / GEO3).